A 391-amino-acid chain; its full sequence is Probable tRNA sulfurtransferase (391 aa).

The 108-residue stretch at D60–L167 folds into the THUMP domain. ATP is bound by residues L184–L185, Y209–F210, R266, G288, and Q297.

Belongs to the ThiI family.

The protein resides in the cytoplasm. It catalyses the reaction [ThiI sulfur-carrier protein]-S-sulfanyl-L-cysteine + a uridine in tRNA + 2 reduced [2Fe-2S]-[ferredoxin] + ATP + H(+) = [ThiI sulfur-carrier protein]-L-cysteine + a 4-thiouridine in tRNA + 2 oxidized [2Fe-2S]-[ferredoxin] + AMP + diphosphate. The catalysed reaction is [ThiS sulfur-carrier protein]-C-terminal Gly-Gly-AMP + S-sulfanyl-L-cysteinyl-[cysteine desulfurase] + AH2 = [ThiS sulfur-carrier protein]-C-terminal-Gly-aminoethanethioate + L-cysteinyl-[cysteine desulfurase] + A + AMP + 2 H(+). It participates in cofactor biosynthesis; thiamine diphosphate biosynthesis. Functionally, catalyzes the ATP-dependent transfer of a sulfur to tRNA to produce 4-thiouridine in position 8 of tRNAs, which functions as a near-UV photosensor. Also catalyzes the transfer of sulfur to the sulfur carrier protein ThiS, forming ThiS-thiocarboxylate. This is a step in the synthesis of thiazole, in the thiamine biosynthesis pathway. The sulfur is donated as persulfide by IscS. In Lachnoclostridium phytofermentans (strain ATCC 700394 / DSM 18823 / ISDg) (Clostridium phytofermentans), this protein is Probable tRNA sulfurtransferase.